The primary structure comprises 4010 residues: Extracellular matrix organizing protein FRAS1 (4010 aa).

The signal sequence occupies residues Met1 to Gly25. VWFC domains are found at residues Ala26–Ala87, Gly92–Val152, Lys156–Ser216, Arg218–Ala278, and Arg282–Ile342. At Ala26 to Ser3903 the chain is on the extracellular side. A Phosphoserine modification is found at Ser343. Positions Ser358–Thr416 constitute a VWFC 6 domain. 14 FU repeats span residues Lys408–Gln459, Gly461–Gln504, His506–Asn552, Gln554–Ala598, Thr601–Pro646, His648–Leu704, Thr707–Asn752, Glu754–Leu799, Val802–Lys851, Arg853–Leu899, Asn902–Leu947, Thr951–Arg996, Ser998–Ala1041, and Lys1045–Gly1088. Asn727 carries N-linked (GlcNAc...) asparagine glycosylation. 2 N-linked (GlcNAc...) asparagine glycosylation sites follow: Asn1094 and Asn1107. CSPG repeat units follow at residues Thr1101–Ser1196, Ala1216–Asn1307, Ala1328–Ser1440, Ala1465–Ala1561, Pro1597–Thr1691, Gly1712–Ser1812, and Pro1834–Ser1938. Asn1506 carries an N-linked (GlcNAc...) asparagine glycan. An N-linked (GlcNAc...) asparagine glycan is attached at Asn1779. 2 N-linked (GlcNAc...) asparagine glycosylation sites follow: Asn1950 and Asn1980. 5 CSPG repeats span residues Glu1959–Thr2059, Ile2080–Val2179, Pro2201–Ser2293, Ala2313–Ser2406, and Thr2441–Lys2538. 5 Calx-beta domains span residues Val2545 to Ser2648, Ala2661 to Ala2772, Ala2786 to Ser2892, Ile2907 to Gly3009, and Ala3027 to Gly3131. Residues Asn2565, Asn2666, and Asn2684 are each glycosylated (N-linked (GlcNAc...) asparagine). N-linked (GlcNAc...) asparagine glycosylation is found at Asn2910, Asn2987, Asn3072, Asn3220, Asn3678, and Asn3877. The helical transmembrane segment at Ile3904–Val3924 threads the bilayer. Topologically, residues Thr3925 to Val4010 are cytoplasmic.

Belongs to the FRAS1 family.

Its subcellular location is the cell membrane. Involved in extracellular matrix organization. Required for the regulation of epidermal-basement membrane adhesion responsible for proper organogenesis during embryonic development. Involved in brain organization and function. In Mus musculus (Mouse), this protein is Extracellular matrix organizing protein FRAS1.